The following is a 341-amino-acid chain: MSLSQEIVSLVKEAETVLSSATTEQELDALKNQFLGKKGKLTSVLKGLASLTVEEKKTVGKEANEAQTKLEQFVEAKRTILKESFYENQLGKESFDTLRPLPKKERGSLHPISQIQYEIEDIFTSMGFSVMDGPEVETDENNFGALNFTEDHPARDMQDTFYTVDGNLLRTHTSAIQVRALRKLKPPFRIIAPGRVFRYEEVDASHENTFYQVEGMVVGENISVAHLIYTMETLLSRVFRKEIKTRLRPGYFPFVEPGFELDINCLVCSGDGCSVCKQSGWLELLPCGLVHPNVLEAAGLDSKKWTGFAFGLGLDRLVMMRYGIHDIRYFQSGNLRFLKQF.

E256 contributes to the Mg(2+) binding site.

The protein belongs to the class-II aminoacyl-tRNA synthetase family. Phe-tRNA synthetase alpha subunit type 1 subfamily. Tetramer of two alpha and two beta subunits. It depends on Mg(2+) as a cofactor.

The protein localises to the cytoplasm. It carries out the reaction tRNA(Phe) + L-phenylalanine + ATP = L-phenylalanyl-tRNA(Phe) + AMP + diphosphate + H(+). The polypeptide is Phenylalanine--tRNA ligase alpha subunit (Leptospira biflexa serovar Patoc (strain Patoc 1 / Ames)).